Reading from the N-terminus, the 709-residue chain is Golgin-84 (709 aa).

The Cytoplasmic portion of the chain corresponds to 1-664 (MASWLKVAED…RATRFLWRHP (664 aa)). Disordered regions lie at residues 24–132 (TELS…VVDR), 144–195 (EVEV…NQDA), and 211–265 (EVIH…DQLE). Low complexity predominate over residues 29–43 (EQSSPQPSGSSSQEG). The span at 78-89 (PPRERIKIEKIR) shows a compositional bias: basic and acidic residues. Residues 94-113 (VDSSSVDASASKPDVSSSDV) show a composition bias toward low complexity. The segment covering 114 to 132 (KGLDDDGGAEKEEKVVVDR) has biased composition (basic and acidic residues). A compositionally biased stretch (low complexity) spans 162-180 (DGAADSGNSEGAAESSAPS). Composition is skewed to basic and acidic residues over residues 211 to 222 (EVIHEKNIKEVP) and 248 to 265 (QQEH…DQLE). Residues 287-592 (RVCAGLSSRL…AALEFQLEKS (306 aa)) adopt a coiled-coil conformation. Residues 665 to 684 (VARVSLLFYLVFVHLFLMYL) form a helical; Signal-anchor for type II membrane protein membrane-spanning segment. Residues 685 to 707 (MHRLQDFASREGPTAMGGLANSD) lie on the Lumenal side of the membrane.

The protein localises to the golgi apparatus membrane. Its function is as follows. May be involved in maintaining Golgi structure and in intra-Golgi transport. The protein is Golgin-84 of Oryza sativa subsp. japonica (Rice).